The primary structure comprises 81 residues: ATP synthase subunit c (81 aa).

The next 2 membrane-spanning stretches (helical) occupy residues 7 to 27 (AASV…PGLG) and 57 to 77 (LAFM…LLFA).

This sequence belongs to the ATPase C chain family. As to quaternary structure, F-type ATPases have 2 components, F(1) - the catalytic core - and F(0) - the membrane proton channel. F(1) has five subunits: alpha(3), beta(3), gamma(1), delta(1), epsilon(1). F(0) has four main subunits: a(1), b(1), b'(1) and c(10-14). The alpha and beta chains form an alternating ring which encloses part of the gamma chain. F(1) is attached to F(0) by a central stalk formed by the gamma and epsilon chains, while a peripheral stalk is formed by the delta, b and b' chains.

It is found in the cellular thylakoid membrane. Its function is as follows. F(1)F(0) ATP synthase produces ATP from ADP in the presence of a proton or sodium gradient. F-type ATPases consist of two structural domains, F(1) containing the extramembraneous catalytic core and F(0) containing the membrane proton channel, linked together by a central stalk and a peripheral stalk. During catalysis, ATP synthesis in the catalytic domain of F(1) is coupled via a rotary mechanism of the central stalk subunits to proton translocation. In terms of biological role, key component of the F(0) channel; it plays a direct role in translocation across the membrane. A homomeric c-ring of between 10-14 subunits forms the central stalk rotor element with the F(1) delta and epsilon subunits. The chain is ATP synthase subunit c from Synechococcus sp. (strain JA-3-3Ab) (Cyanobacteria bacterium Yellowstone A-Prime).